The chain runs to 85 residues: Small ribosomal subunit protein uS17 (85 aa).

It belongs to the universal ribosomal protein uS17 family. In terms of assembly, part of the 30S ribosomal subunit.

Its function is as follows. One of the primary rRNA binding proteins, it binds specifically to the 5'-end of 16S ribosomal RNA. The polypeptide is Small ribosomal subunit protein uS17 (Blochmanniella floridana).